Consider the following 129-residue polypeptide: Fluoride-specific ion channel FluC 1 (129 aa).

4 consecutive transmembrane segments (helical) span residues 9–29, 33–53, 62–82, and 98–118; these read LSVG…NLIW, GTLT…YFFV, LVTG…SFNL, and IYFF…MLVG. 2 residues coordinate Na(+): Gly-72 and Thr-75.

This sequence belongs to the fluoride channel Fluc/FEX (TC 1.A.43) family.

It localises to the cell membrane. It carries out the reaction fluoride(in) = fluoride(out). Na(+) is not transported, but it plays an essential structural role and its presence is essential for fluoride channel function. Functionally, fluoride-specific ion channel. Important for reducing fluoride concentration in the cell, thus reducing its toxicity. This Lactobacillus johnsonii (strain CNCM I-12250 / La1 / NCC 533) protein is Fluoride-specific ion channel FluC 1.